Reading from the N-terminus, the 492-residue chain is UPF0236 protein TTE0402 (492 aa).

It belongs to the UPF0236 family.

This chain is UPF0236 protein TTE0402, found in Caldanaerobacter subterraneus subsp. tengcongensis (strain DSM 15242 / JCM 11007 / NBRC 100824 / MB4) (Thermoanaerobacter tengcongensis).